A 186-amino-acid chain; its full sequence is Cytochrome b6-f complex iron-sulfur subunit (186 aa).

Residues 16 to 38 (LLSFVTGGAIAATTAATLYPVVL) traverse the membrane as a helical segment. The region spanning 74–163 (GEPVLTLGLD…ATVSDDKVLI (90 aa)) is the Rieske domain. The [2Fe-2S] cluster site is built by cysteine 109, histidine 111, cysteine 127, and histidine 130. Cysteine 114 and cysteine 129 form a disulfide bridge.

The protein belongs to the Rieske iron-sulfur protein family. In terms of assembly, the 4 large subunits of the cytochrome b6-f complex are cytochrome b6, subunit IV (17 kDa polypeptide, PetD), cytochrome f and the Rieske protein, while the 4 small subunits are PetG, PetL, PetM and PetN. The complex functions as a dimer. It depends on [2Fe-2S] cluster as a cofactor.

It localises to the cell inner membrane. It catalyses the reaction 2 oxidized [plastocyanin] + a plastoquinol + 2 H(+)(in) = 2 reduced [plastocyanin] + a plastoquinone + 4 H(+)(out). Its function is as follows. Component of the cytochrome b6-f complex, which mediates electron transfer between photosystem II (PSII) and photosystem I (PSI), cyclic electron flow around PSI, and state transitions. This Gloeobacter violaceus (strain ATCC 29082 / PCC 7421) protein is Cytochrome b6-f complex iron-sulfur subunit.